The chain runs to 141 residues: 4-hydroxybenzoyl-CoA thioesterase (141 aa).

Aspartate 17 is an active-site residue. Substrate contacts are provided by residues tryptophan 47, 59–61, and lysine 90; that span reads TPI.

It belongs to the 4-hydroxybenzoyl-CoA thioesterase family. As to quaternary structure, homotetramer.

The catalysed reaction is 4-hydroxybenzoyl-CoA + H2O = 4-hydroxybenzoate + CoA + H(+). Its pathway is xenobiotic degradation; 4-chlorobenzoate degradation; 4-hydroxybenzoate from 4-chlorobenzoate: step 3/3. Unaffected by EDTA, Mg(2+), Mn(2+), Fe(2+), Ca(2+), Co(2+) and Zn(2+). In terms of biological role, hydrolyzes 4-hydroxybenzoate-CoA, and to a lesser extent benzoyl-CoA and 4-chlorobenzoate-CoA. Not active against aliphatic acyl-CoA thioesters, including palmitoyl-CoA, hexanoyl-CoA and acetyl-CoA. In Pseudomonas sp. (strain CBS-3), this protein is 4-hydroxybenzoyl-CoA thioesterase.